Here is a 282-residue protein sequence, read N- to C-terminus: Protein-glutamine deamidase Cif (282 aa).

Residues 1-16 are translocation domain (TD); that stretch reads MKDITLPPPTSASCLT. Residues Cys109, His165, and Gln185 contribute to the active site.

This sequence belongs to the Cif family.

The protein localises to the secreted. It is found in the host nucleus. The catalysed reaction is L-glutaminyl-[protein] + H2O = L-glutamyl-[protein] + NH4(+). Its function is as follows. Protein-glutamine deamidase effector that inhibits the host cell cycle and other key cellular processes such as the actin network and programmed-cell death. Acts by mediating the side chain deamidation of 'Gln-40' of host NEDD8, converting it to glutamate, thereby abolishing the activity of cullin-RING-based E3 ubiquitin-protein ligase complexes (CRL complexes). Inactivation of CRL complexes prevents ubiquitination and subsequent degradation of the cyclin-dependent kinase inhibitors CDKN1A/p21 and CDKN1B/p27, leading to G1 and G2 cell cycle arrests in host cells. Also able to catalyze deamidation of 'Gln-40' of host ubiquitin in vitro; however, NEDD8 constitutes the preferred substrate in vivo. This Escherichia coli protein is Protein-glutamine deamidase Cif.